A 342-amino-acid polypeptide reads, in one-letter code: Metalloendoproteinase 4-MMP (342 aa).

The signal sequence occupies residues 1–34 (MHHHHHPCNRKPFTTIFSFFLLYLNLHNQQIIEA). The propeptide at 35-124 (RNPSQFTTNP…KTAPFHTGKK (90 aa)) is activation peptide. Residues 104–111 (PRCGFPDD) carry the Cysteine switch motif. Positions 106 and 252 each coordinate Zn(2+). Residue E253 is part of the active site. 2 residues coordinate Zn(2+): H256 and H262. N-linked (GlcNAc...) asparagine glycosylation occurs at N300. The GPI-anchor amidated aspartate moiety is linked to residue D317. A propeptide spans 318 to 342 (GSRIRSQGMIYSTLSTVIALCFLNW) (removed in mature form).

This sequence belongs to the peptidase M10A family. Matrix metalloproteinases (MMPs) subfamily. Zn(2+) is required as a cofactor. As to expression, mostly expressed in flowers and stems, and, to a lower extent, in leaves and roots.

The protein localises to the cell membrane. Its activity is regulated as follows. Repressed by acetohydroxamic acid (AHA). Functionally, matrix metalloproteinases (MMPs) or matrixins may play a role in the degradation and remodeling of the extracellular matrix (ECM) during development or in response to stresses. Active on myelin basic protein (MBP) and, to some extent, on McaPLGLDpaAR-NH(2) (QF24) and beta-casein. The sequence is that of Metalloendoproteinase 4-MMP from Arabidopsis thaliana (Mouse-ear cress).